We begin with the raw amino-acid sequence, 120 residues long: Secreted RxLR effector protein RXLR-C26 (120 aa).

A signal peptide spans 1-29; sequence MTGILCFPPFARFFMLLSGCAWLAGVSSG. A RxLR-dEER motif is present at residues 57–77; it reads RNLRGHINSAIIEANDTSEER. The N-linked (GlcNAc...) asparagine glycan is linked to N71.

This sequence belongs to the RxLR effector family.

It is found in the secreted. Its subcellular location is the host cytoplasm. The protein localises to the host nucleus. Functionally, secreted effector that does not suppress pattern-triggered immunity (PTI) in plant host. The polypeptide is Secreted RxLR effector protein RXLR-C26 (Plasmopara halstedii (Downy mildew of sunflower)).